Consider the following 238-residue polypeptide: Pyridoxine 5'-phosphate synthase (238 aa).

3-amino-2-oxopropyl phosphate contacts are provided by Asn7 and Arg18. His43 functions as the Proton acceptor in the catalytic mechanism. 1-deoxy-D-xylulose 5-phosphate-binding residues include Arg45 and His50. Glu70 (proton acceptor) is an active-site residue. Thr100 provides a ligand contact to 1-deoxy-D-xylulose 5-phosphate. Catalysis depends on His190, which acts as the Proton donor. 3-amino-2-oxopropyl phosphate is bound by residues Asp191 and 213-214 (GH).

It belongs to the PNP synthase family. In terms of assembly, homooctamer; tetramer of dimers.

It localises to the cytoplasm. It carries out the reaction 3-amino-2-oxopropyl phosphate + 1-deoxy-D-xylulose 5-phosphate = pyridoxine 5'-phosphate + phosphate + 2 H2O + H(+). It participates in cofactor biosynthesis; pyridoxine 5'-phosphate biosynthesis; pyridoxine 5'-phosphate from D-erythrose 4-phosphate: step 5/5. Functionally, catalyzes the complicated ring closure reaction between the two acyclic compounds 1-deoxy-D-xylulose-5-phosphate (DXP) and 3-amino-2-oxopropyl phosphate (1-amino-acetone-3-phosphate or AAP) to form pyridoxine 5'-phosphate (PNP) and inorganic phosphate. This chain is Pyridoxine 5'-phosphate synthase, found in Cytophaga hutchinsonii (strain ATCC 33406 / DSM 1761 / CIP 103989 / NBRC 15051 / NCIMB 9469 / D465).